We begin with the raw amino-acid sequence, 474 residues long: Gamma-aminobutyric acid receptor subunit beta-1 (474 aa).

The first 25 residues, 1 to 25, serve as a signal peptide directing secretion; sequence MWTVQNRESLGLLSFPVMVAMVCCA. The Extracellular portion of the chain corresponds to 26 to 245; that stretch reads HSSNEPSNMS…SFRLKRNIGY (220 aa). N-linked (GlcNAc...) asparagine glycans are attached at residues N33 and N105. Residue Y122 coordinates histamine. A disulfide bond links C161 and C175. A glycan (N-linked (GlcNAc...) asparagine) is linked at N174. Histamine-binding positions include 181–182 and T227; that span reads SY. The 4-aminobutanoate site is built by Y182 and T227. The next 3 membrane-spanning stretches (helical) occupy residues 246–267, 271–293, and 305–327; these read FILQ…SFWI, ASAA…STHL, and AIDI…YAFV. Over 328–451 the chain is Cytoplasmic; the sequence is NYIFFGKGPQ…DLTDVNSIDK (124 aa). A helical transmembrane segment spans residues 452 to 473; the sequence is WSRMFFPITFSLFNVVYWLYYV.

This sequence belongs to the ligand-gated ion channel (TC 1.A.9) family. Gamma-aminobutyric acid receptor (TC 1.A.9.5) subfamily. GABRB1 sub-subfamily. As to quaternary structure, heteropentamer, formed by a combination of alpha (GABRA1-6), beta (GABRB1-3), gamma (GABRG1-3), delta (GABRD), epsilon (GABRE), rho (GABRR1-3), pi (GABRP) and theta (GABRQ) chains, each subunit exhibiting distinct physiological and pharmacological properties. Binds UBQLN1.

Its subcellular location is the postsynaptic cell membrane. The protein resides in the cell membrane. The enzyme catalyses chloride(in) = chloride(out). Its activity is regulated as follows. Potentiated by histamine. In terms of biological role, beta subunit of the heteropentameric ligand-gated chloride channel gated by gamma-aminobutyric acid (GABA), a major inhibitory neurotransmitter in the brain. GABA-gated chloride channels, also named GABA(A) receptors (GABAAR), consist of five subunits arranged around a central pore and contain GABA active binding site(s) located at the alpha and beta subunit interface(s). When activated by GABA, GABAARs selectively allow the flow of chloride anions across the cell membrane down their electrochemical gradient. Chloride influx into the postsynaptic neuron following GABAAR opening decreases the neuron ability to generate a new action potential, thereby reducing nerve transmission. Beta-containing GABAARs can simultaneously bind GABA and histamine where histamine binds at the interface of two neighboring beta subunits, which may be involved in the regulation of sleep and wakefulness. The sequence is that of Gamma-aminobutyric acid receptor subunit beta-1 from Mus musculus (Mouse).